Consider the following 225-residue polypeptide: UPF0700 transmembrane protein RA0705 (225 aa).

The next 6 membrane-spanning stretches (helical) occupy residues 17–37 (VGLALVAAISFLAGMTDAIGL), 66–86 (GLLLIGGLVSFVLGNAAGVMI), 95–115 (ALLFVSALLACAALQEGQPEL), 117–137 (FVSLIFAMGAVNASVEQIEGL), 168–188 (IIQIVPWLGMFAGAIMGAVLV), and 194–214 (LALWVPSLAALLLTAAAFQIP).

The protein belongs to the UPF0700 family.

It is found in the cell membrane. This is UPF0700 transmembrane protein RA0705 from Rhizobium meliloti (strain 1021) (Ensifer meliloti).